The chain runs to 638 residues: Threonine--tRNA ligase (638 aa).

The TGS domain maps to 1–61 (MVAITLPDGK…DRDVNLSIIT (61 aa)). The interval 244 to 536 (DHRRLGREME…LIENFAGRFP (293 aa)) is catalytic. Zn(2+) contacts are provided by cysteine 336, histidine 387, and histidine 513.

Belongs to the class-II aminoacyl-tRNA synthetase family. In terms of assembly, homodimer. It depends on Zn(2+) as a cofactor.

The protein localises to the cytoplasm. It catalyses the reaction tRNA(Thr) + L-threonine + ATP = L-threonyl-tRNA(Thr) + AMP + diphosphate + H(+). Catalyzes the attachment of threonine to tRNA(Thr) in a two-step reaction: L-threonine is first activated by ATP to form Thr-AMP and then transferred to the acceptor end of tRNA(Thr). Also edits incorrectly charged L-seryl-tRNA(Thr). The chain is Threonine--tRNA ligase from Paramagnetospirillum magneticum (strain ATCC 700264 / AMB-1) (Magnetospirillum magneticum).